The chain runs to 528 residues: Cytochrome b5 reductase 4 (528 aa).

Met1 is subject to N-acetylmethionine. The tract at residues 1-29 is disordered; sequence MLNVPSQAFPAPGSQQRVSSQGRSKVPLK. Residues 13-24 are compositionally biased toward low complexity; it reads GSQQRVSSQGRS. Positions 54-130 constitute a Cytochrome b5 heme-binding domain; it reads LIEVTEEELK…LKECLVGRMA (77 aa). Heme-binding residues include His89 and His112. The region spanning 172–263 is the CS domain; the sequence is LSSPSYDWFQ…KESVSWQCLG (92 aa). The region spanning 280 to 392 is the FAD-binding FR-type domain; the sequence is LYYRRCQLIS…SGPEGDFKVS (113 aa). FAD contacts are provided by residues 372-387 and 399-431; these read DRLQ…GPEG and DLFL…KVKL.

The protein belongs to the flavoprotein pyridine nucleotide cytochrome reductase family. FAD serves as cofactor. Ubiquitously expressed. Isoform 2 is expressed in testis, brain, skeletal muscle and in the male germline.

The protein resides in the endoplasmic reticulum. The enzyme catalyses 2 Fe(III)-[cytochrome b5] + NADH = 2 Fe(II)-[cytochrome b5] + NAD(+) + H(+). Functionally, NADH-cytochrome b5 reductase involved in endoplasmic reticulum stress response pathway. Plays a critical role in protecting pancreatic beta-cells against oxidant stress, possibly by protecting the cell from excess buildup of reactive oxygen species (ROS). In Mus musculus (Mouse), this protein is Cytochrome b5 reductase 4 (Cyb5r4).